Consider the following 929-residue polypeptide: Valine--tRNA ligase (929 aa).

Residues 59 to 69 (PNVTGSLHMGH) carry the 'HIGH' region motif. The 'KMSKS' region signature appears at 557–561 (KMSKS). Lys-560 contacts ATP. The stretch at 862-929 (LVDLDALRGR…LARQRLSDLG (68 aa)) forms a coiled coil.

This sequence belongs to the class-I aminoacyl-tRNA synthetase family. ValS type 1 subfamily. Monomer.

The protein localises to the cytoplasm. The catalysed reaction is tRNA(Val) + L-valine + ATP = L-valyl-tRNA(Val) + AMP + diphosphate. Its function is as follows. Catalyzes the attachment of valine to tRNA(Val). As ValRS can inadvertently accommodate and process structurally similar amino acids such as threonine, to avoid such errors, it has a 'posttransfer' editing activity that hydrolyzes mischarged Thr-tRNA(Val) in a tRNA-dependent manner. This is Valine--tRNA ligase from Prochlorococcus marinus (strain MIT 9313).